The following is a 315-amino-acid chain: Methionyl-tRNA formyltransferase (315 aa).

Residue 113–116 (SLLP) participates in (6S)-5,6,7,8-tetrahydrofolate binding.

The protein belongs to the Fmt family.

It carries out the reaction L-methionyl-tRNA(fMet) + (6R)-10-formyltetrahydrofolate = N-formyl-L-methionyl-tRNA(fMet) + (6S)-5,6,7,8-tetrahydrofolate + H(+). Attaches a formyl group to the free amino group of methionyl-tRNA(fMet). The formyl group appears to play a dual role in the initiator identity of N-formylmethionyl-tRNA by promoting its recognition by IF2 and preventing the misappropriation of this tRNA by the elongation apparatus. The sequence is that of Methionyl-tRNA formyltransferase from Escherichia coli (strain SMS-3-5 / SECEC).